Consider the following 269-residue polypeptide: 2-dehydro-3-deoxyphosphooctonate aldolase (269 aa).

The protein belongs to the KdsA family.

The protein resides in the cytoplasm. It carries out the reaction D-arabinose 5-phosphate + phosphoenolpyruvate + H2O = 3-deoxy-alpha-D-manno-2-octulosonate-8-phosphate + phosphate. It functions in the pathway carbohydrate biosynthesis; 3-deoxy-D-manno-octulosonate biosynthesis; 3-deoxy-D-manno-octulosonate from D-ribulose 5-phosphate: step 2/3. The protein operates within bacterial outer membrane biogenesis; lipopolysaccharide biosynthesis. The chain is 2-dehydro-3-deoxyphosphooctonate aldolase from Chlamydia felis (strain Fe/C-56) (Chlamydophila felis).